We begin with the raw amino-acid sequence, 301 residues long: Probable 2-(5''-triphosphoribosyl)-3'-dephosphocoenzyme-A synthase (301 aa).

It belongs to the CitG/MdcB family.

The enzyme catalyses 3'-dephospho-CoA + ATP = 2'-(5''-triphospho-alpha-D-ribosyl)-3'-dephospho-CoA + adenine. The sequence is that of Probable 2-(5''-triphosphoribosyl)-3'-dephosphocoenzyme-A synthase from Pectobacterium carotovorum subsp. carotovorum (strain PC1).